The following is a 330-amino-acid chain: Aspartate--ammonia ligase (330 aa).

This sequence belongs to the class-II aminoacyl-tRNA synthetase family. AsnA subfamily.

It localises to the cytoplasm. It carries out the reaction L-aspartate + NH4(+) + ATP = L-asparagine + AMP + diphosphate + H(+). The protein operates within amino-acid biosynthesis; L-asparagine biosynthesis; L-asparagine from L-aspartate (ammonia route): step 1/1. The polypeptide is Aspartate--ammonia ligase (Streptococcus pyogenes serotype M6 (strain ATCC BAA-946 / MGAS10394)).